The sequence spans 503 residues: Maturase K (503 aa).

Belongs to the intron maturase 2 family. MatK subfamily.

Its subcellular location is the plastid. It localises to the chloroplast. Functionally, usually encoded in the trnK tRNA gene intron. Probably assists in splicing its own and other chloroplast group II introns. In Psilotum nudum (Whisk fern), this protein is Maturase K.